Consider the following 193-residue polypeptide: Protein CURVATURE THYLAKOID 1D, chloroplastic (193 aa).

Residues 1–51 constitute a chloroplast transit peptide; it reads MELCTRSTTIITHLPASFNGHGYLAGKSVDRISLPLQRNVASLVLQSRTLR. Over 52-117 the chain is Stromal; it reads CSRKFPGETV…NDIKLDSDKT (66 aa). A helical transmembrane segment spans residues 118–138; the sequence is YSILLYGSGAIVALYLTSAIV. Topologically, residues 139-142 are lumenal; that stretch reads SSLE. A helical membrane pass occupies residues 143–163; that stretch reads AIPLFPKLMEVVGLGYTLWFT. Over 164-193 the chain is Stromal; it reads TRYLLFKRNREELKTKVSEIKKQVLGSDSE.

The protein belongs to the CURT family. In terms of assembly, homo- and heterodimers and trimers.

Its subcellular location is the plastid. It localises to the chloroplast thylakoid membrane. Its function is as follows. Determines thylakoid architecture by inducing membrane curvature. The sequence is that of Protein CURVATURE THYLAKOID 1D, chloroplastic (CURT1D) from Arabidopsis thaliana (Mouse-ear cress).